The following is a 297-amino-acid chain: 4-hydroxy-tetrahydrodipicolinate synthase (297 aa).

A pyruvate-binding site is contributed by threonine 46. The active-site Proton donor/acceptor is the tyrosine 134. Lysine 162 functions as the Schiff-base intermediate with substrate in the catalytic mechanism. Isoleucine 204 serves as a coordination point for pyruvate.

Belongs to the DapA family. Homotetramer; dimer of dimers.

The protein localises to the cytoplasm. The enzyme catalyses L-aspartate 4-semialdehyde + pyruvate = (2S,4S)-4-hydroxy-2,3,4,5-tetrahydrodipicolinate + H2O + H(+). Its pathway is amino-acid biosynthesis; L-lysine biosynthesis via DAP pathway; (S)-tetrahydrodipicolinate from L-aspartate: step 3/4. Functionally, catalyzes the condensation of (S)-aspartate-beta-semialdehyde [(S)-ASA] and pyruvate to 4-hydroxy-tetrahydrodipicolinate (HTPA). The sequence is that of 4-hydroxy-tetrahydrodipicolinate synthase from Stenotrophomonas maltophilia (strain K279a).